A 201-amino-acid chain; its full sequence is Ribonuclease MRP protein subunit RMP1 (201 aa).

Residues 86-108 (YWQFNGVIALGQFVTLGCTLVTL) form a helical membrane-spanning segment.

Component of RNase MRP complex which consists of an RNA moiety and at least 10 protein subunits including POP1, POP3, POP4, POP5, POP6, POP7, POP8, RMP1, RPP1 and SNM1, many of which are shared with the RNase P complex.

The protein localises to the membrane. Its subcellular location is the cytoplasm. It localises to the nucleus. In terms of biological role, functions as part of ribonuclease MRP (RNase MRP), which is involved in rRNA processing in mitochondria. The chain is Ribonuclease MRP protein subunit RMP1 from Saccharomyces cerevisiae (strain ATCC 204508 / S288c) (Baker's yeast).